The following is a 164-amino-acid chain: Zinc finger A20 and AN1 domain-containing stress-associated protein 1 (164 aa).

Residues 16-50 form an A20-type zinc finger; the sequence is APEITLCANSCGFPGNPATQNLCQNCFLAATASTS. 4 residues coordinate Zn(2+): Cys-22, Cys-26, Cys-38, and Cys-41. The span at 48 to 58 shows a compositional bias: low complexity; the sequence is STSSPSSLSSP. The interval 48–81 is disordered; the sequence is STSSPSSLSSPVLDKQPPRPAAPLVEPQAPLPPP. An AN1-type zinc finger spans residues 99–145; that stretch reads TSAVNRCSRCRKRVGLTGFRCRCGHLFCGEHRYSDRHGCSYDYKSAA. Zn(2+)-binding residues include Cys-105, Cys-108, Cys-119, Cys-121, Cys-126, His-129, His-135, and Cys-137.

Its function is as follows. May be involved in environmental stress response. This chain is Zinc finger A20 and AN1 domain-containing stress-associated protein 1 (SAP1), found in Oryza sativa subsp. indica (Rice).